A 207-amino-acid chain; its full sequence is Peptidyl-tRNA hydrolase (207 aa).

Y17 serves as a coordination point for tRNA. The active-site Proton acceptor is the H22. Positions 68, 70, and 116 each coordinate tRNA.

Belongs to the PTH family. Monomer.

The protein localises to the cytoplasm. It carries out the reaction an N-acyl-L-alpha-aminoacyl-tRNA + H2O = an N-acyl-L-amino acid + a tRNA + H(+). Functionally, hydrolyzes ribosome-free peptidyl-tRNAs (with 1 or more amino acids incorporated), which drop off the ribosome during protein synthesis, or as a result of ribosome stalling. Its function is as follows. Catalyzes the release of premature peptidyl moieties from peptidyl-tRNA molecules trapped in stalled 50S ribosomal subunits, and thus maintains levels of free tRNAs and 50S ribosomes. This is Peptidyl-tRNA hydrolase from Buchnera aphidicola subsp. Baizongia pistaciae (strain Bp).